A 313-amino-acid polypeptide reads, in one-letter code: Ornithine carbamoyltransferase (313 aa).

Residues 57–60 (STRT), Gln84, Arg108, and 135–138 (HPTQ) each bind carbamoyl phosphate. L-ornithine-binding positions include Asn167, Asp231, and 235–236 (SM). Carbamoyl phosphate-binding positions include 272–273 (CL) and Arg300.

This sequence belongs to the aspartate/ornithine carbamoyltransferase superfamily. OTCase family.

The protein resides in the cytoplasm. It carries out the reaction carbamoyl phosphate + L-ornithine = L-citrulline + phosphate + H(+). It participates in amino-acid biosynthesis; L-arginine biosynthesis; L-arginine from L-ornithine and carbamoyl phosphate: step 1/3. Functionally, reversibly catalyzes the transfer of the carbamoyl group from carbamoyl phosphate (CP) to the N(epsilon) atom of ornithine (ORN) to produce L-citrulline. The polypeptide is Ornithine carbamoyltransferase (Caldanaerobacter subterraneus subsp. tengcongensis (strain DSM 15242 / JCM 11007 / NBRC 100824 / MB4) (Thermoanaerobacter tengcongensis)).